The sequence spans 258 residues: ER membrane protein complex subunit 3 (258 aa).

The next 3 membrane-spanning stretches (helical) occupy residues 8–28 (PALRNWVLLPIMFVMILIGIL), 123–143 (VVPQTIIMTWINEFFSGFILL), and 173–193 (SISWYFLNLFGLKSVYALLLG).

The protein belongs to the EMC3 family.

The protein resides in the cytoplasm. Its subcellular location is the membrane. The sequence is that of ER membrane protein complex subunit 3 from Schizosaccharomyces pombe (strain 972 / ATCC 24843) (Fission yeast).